Reading from the N-terminus, the 222-residue chain is GTP cyclohydrolase 1 (222 aa).

Zn(2+)-binding residues include cysteine 111, histidine 114, and cysteine 182.

This sequence belongs to the GTP cyclohydrolase I family. In terms of assembly, toroid-shaped homodecamer, composed of two pentamers of five dimers.

It carries out the reaction GTP + H2O = 7,8-dihydroneopterin 3'-triphosphate + formate + H(+). The protein operates within cofactor biosynthesis; 7,8-dihydroneopterin triphosphate biosynthesis; 7,8-dihydroneopterin triphosphate from GTP: step 1/1. The sequence is that of GTP cyclohydrolase 1 from Enterobacter sp. (strain 638).